The sequence spans 194 residues: Imidazoleglycerol-phosphate dehydratase (194 aa).

This sequence belongs to the imidazoleglycerol-phosphate dehydratase family.

It localises to the cytoplasm. The catalysed reaction is D-erythro-1-(imidazol-4-yl)glycerol 3-phosphate = 3-(imidazol-4-yl)-2-oxopropyl phosphate + H2O. Its pathway is amino-acid biosynthesis; L-histidine biosynthesis; L-histidine from 5-phospho-alpha-D-ribose 1-diphosphate: step 6/9. The sequence is that of Imidazoleglycerol-phosphate dehydratase from Rubrobacter xylanophilus (strain DSM 9941 / JCM 11954 / NBRC 16129 / PRD-1).